The chain runs to 311 residues: F-box protein At3g18320 (311 aa).

Residues 1-46 (MTLPELPKDLVEEILCFVPATSLKRLRSTCKGWNRLFKDDKRFARK) enclose the F-box domain.

In Arabidopsis thaliana (Mouse-ear cress), this protein is F-box protein At3g18320.